Reading from the N-terminus, the 428-residue chain is Phosphoribosylamine--glycine ligase (428 aa).

Positions 109 to 316 (KDFLARHNIP…LVELCLAGTQ (208 aa)) constitute an ATP-grasp domain. Residue 135–196 (VRQKGAPIVI…EEFLDGEEAS (62 aa)) participates in ATP binding. The Mg(2+) site is built by Glu286 and Asn288.

The protein belongs to the GARS family. Mg(2+) is required as a cofactor. Mn(2+) serves as cofactor.

The enzyme catalyses 5-phospho-beta-D-ribosylamine + glycine + ATP = N(1)-(5-phospho-beta-D-ribosyl)glycinamide + ADP + phosphate + H(+). It participates in purine metabolism; IMP biosynthesis via de novo pathway; N(1)-(5-phospho-D-ribosyl)glycinamide from 5-phospho-alpha-D-ribose 1-diphosphate: step 2/2. This chain is Phosphoribosylamine--glycine ligase, found in Yersinia pestis.